Consider the following 161-residue polypeptide: Regulator of ribonuclease activity A (161 aa).

This sequence belongs to the RraA family. In terms of assembly, homotrimer. Binds to both RNA-binding sites in the C-terminal region of Rne and to RhlB.

The protein resides in the cytoplasm. In terms of biological role, globally modulates RNA abundance by binding to RNase E (Rne) and regulating its endonucleolytic activity. Can modulate Rne action in a substrate-dependent manner by altering the composition of the degradosome. Modulates RNA-binding and helicase activities of the degradosome. The polypeptide is Regulator of ribonuclease activity A (Salmonella choleraesuis (strain SC-B67)).